The following is a 580-amino-acid chain: MVASLLCTVAVAVLAVAAVGGEAGVVEHTFVVHEMNVTHLCNTTKIFVVNGQLPGPTVDVTEGDTVVIHVVNKIPHGLTIHWHGVRQLRSCWADGAGFITECPIPPGSERTYRFNVTDQVGTLWWHAHVTCLRSTINGAFIIRPRDGKYPFPTPVKDVPIIIGEWWELDLVELDRRMRDGNFDDNPLSATINGKLGDLSNCSGIVEESFVLNVKHGESYLLRVINTAFFSEYYFKVAGHTFTVVGADGNYLTPFKTDMVTVAPGEAIDVLMVADAPPAHYHMIALANQPPEPDPQIPKYISRGLVRYTGVDANNNGLPVPMPIMPNQHNTMPSYYFHANLTGLMHPKHRRVPMHVDERIFIILGLGTICRGRNTTCKRQRSLETIEVATMNNVSFTHPNTTALLERYYDGTPEGVYTEDFPVRPPRPYNYTNPALIPPGPLEEVLEPTFKATKLKRFKYNTSVEIIFQSSTLLMSDSNPMHLHGYDVFLLAQGLGSFNAKRDIRKFNYHNPQLRNTILVPRGGWAAVRFITDNPGMWYLHCHFEFHIIMGMATAFIVEDGPTPETSLPPPPPEFKRCDAS.

The first 23 residues, 1–23, serve as a signal peptide directing secretion; sequence MVASLLCTVAVAVLAVAAVGGEA. Plastocyanin-like domains are found at residues 31 to 147 and 156 to 310; these read VVHE…PRDG and KDVP…YTGV. N-linked (GlcNAc...) asparagine glycans are attached at residues asparagine 36 and asparagine 42. Cu cation-binding residues include histidine 81 and histidine 83. An N-linked (GlcNAc...) asparagine glycan is attached at asparagine 115. Positions 126 and 128 each coordinate Cu cation. N-linked (GlcNAc...) asparagine glycosylation is found at asparagine 200, asparagine 339, asparagine 373, asparagine 392, asparagine 399, asparagine 429, and asparagine 460. Residues 419–561 enclose the Plastocyanin-like 3 domain; it reads DFPVRPPRPY…ATAFIVEDGP (143 aa). Asparagine 478, histidine 481, histidine 483, histidine 540, cysteine 541, histidine 542, histidine 546, and methionine 551 together coordinate Cu cation. The disordered stretch occupies residues 560–580; it reads GPTPETSLPPPPPEFKRCDAS.

This sequence belongs to the multicopper oxidase family. It depends on Cu cation as a cofactor.

It localises to the secreted. The protein localises to the extracellular space. Its subcellular location is the apoplast. The catalysed reaction is 4 hydroquinone + O2 = 4 benzosemiquinone + 2 H2O. Lignin degradation and detoxification of lignin-derived products. The chain is Laccase-20 (LAC20) from Oryza sativa subsp. japonica (Rice).